A 164-amino-acid polypeptide reads, in one-letter code: Transmembrane protein 234 (164 aa).

3 consecutive transmembrane segments (helical) span residues 1–21, 82–102, and 112–132; these read MAASLGQVLALVLVAALWGGT, LAVPICNSLAIIFTLIVGKAL, and VAGMVLTVIGISLCITSSVPW.

Belongs to the TMEM234 family.

It localises to the membrane. This Homo sapiens (Human) protein is Transmembrane protein 234 (TMEM234).